The following is a 173-amino-acid chain: RNA 2',3'-cyclic phosphodiesterase (173 aa).

His-38 acts as the Proton donor in catalysis. 2 consecutive short sequence motifs (HXTX) follow at residues 38–41 (HITV) and 118–121 (HLTI). Catalysis depends on His-118, which acts as the Proton acceptor.

This sequence belongs to the 2H phosphoesterase superfamily. ThpR family.

It carries out the reaction a 3'-end 2',3'-cyclophospho-ribonucleotide-RNA + H2O = a 3'-end 2'-phospho-ribonucleotide-RNA + H(+). Functionally, hydrolyzes RNA 2',3'-cyclic phosphodiester to an RNA 2'-phosphomonoester. This chain is RNA 2',3'-cyclic phosphodiesterase, found in Methanocaldococcus jannaschii (strain ATCC 43067 / DSM 2661 / JAL-1 / JCM 10045 / NBRC 100440) (Methanococcus jannaschii).